The sequence spans 315 residues: Porphobilinogen deaminase (315 aa).

C234 bears the S-(dipyrrolylmethanemethyl)cysteine mark.

Belongs to the HMBS family. Monomer. It depends on dipyrromethane as a cofactor.

The enzyme catalyses 4 porphobilinogen + H2O = hydroxymethylbilane + 4 NH4(+). It functions in the pathway porphyrin-containing compound metabolism; protoporphyrin-IX biosynthesis; coproporphyrinogen-III from 5-aminolevulinate: step 2/4. In terms of biological role, tetrapolymerization of the monopyrrole PBG into the hydroxymethylbilane pre-uroporphyrinogen in several discrete steps. This chain is Porphobilinogen deaminase, found in Mycobacterium avium (strain 104).